A 700-amino-acid chain; its full sequence is DNA ligase (700 aa).

Residues 61-65, 110-111, and Glu-141 each bind NAD(+); these read DAEYD and SL. Lys-143 serves as the catalytic N6-AMP-lysine intermediate. Arg-164, Glu-202, Lys-321, and Lys-345 together coordinate NAD(+). Zn(2+) contacts are provided by Cys-439, Cys-442, Cys-457, and Cys-462. In terms of domain architecture, BRCT spans 619–700; it reads AVSNKLAGLQ…EFLRLLEDSK (82 aa).

This sequence belongs to the NAD-dependent DNA ligase family. LigA subfamily. It depends on Mg(2+) as a cofactor. Mn(2+) is required as a cofactor.

The catalysed reaction is NAD(+) + (deoxyribonucleotide)n-3'-hydroxyl + 5'-phospho-(deoxyribonucleotide)m = (deoxyribonucleotide)n+m + AMP + beta-nicotinamide D-nucleotide.. Functionally, DNA ligase that catalyzes the formation of phosphodiester linkages between 5'-phosphoryl and 3'-hydroxyl groups in double-stranded DNA using NAD as a coenzyme and as the energy source for the reaction. It is essential for DNA replication and repair of damaged DNA. The chain is DNA ligase from Hydrogenobaculum sp. (strain Y04AAS1).